Here is a 536-residue protein sequence, read N- to C-terminus: Putative UDP-glucuronosyltransferase ugt-47 (536 aa).

The N-terminal stretch at 1–21 (MMLQTSTILQLLLFLVGSVSA) is a signal peptide. N-linked (GlcNAc...) asparagine glycans are attached at residues N52 and N308. The chain crosses the membrane as a helical span at residues 497 to 517 (IIVPVLFVLLYCLIIPFFKLI).

Belongs to the UDP-glycosyltransferase family.

Its subcellular location is the membrane. The enzyme catalyses glucuronate acceptor + UDP-alpha-D-glucuronate = acceptor beta-D-glucuronoside + UDP + H(+). In Caenorhabditis briggsae, this protein is Putative UDP-glucuronosyltransferase ugt-47 (ugt-47).